The following is a 210-amino-acid chain: dITP/XTP pyrophosphatase (210 aa).

19–24 (SNNPGK) contributes to the substrate binding site. D51 and D80 together coordinate Mg(2+). The active-site Proton acceptor is the D80. Substrate-binding positions include S81, 166–169 (FGYD), K189, and 194–195 (HR).

This sequence belongs to the HAM1 NTPase family. Homodimer. Mg(2+) is required as a cofactor.

The enzyme catalyses XTP + H2O = XMP + diphosphate + H(+). The catalysed reaction is dITP + H2O = dIMP + diphosphate + H(+). It catalyses the reaction ITP + H2O = IMP + diphosphate + H(+). Pyrophosphatase that catalyzes the hydrolysis of nucleoside triphosphates to their monophosphate derivatives, with a high preference for the non-canonical purine nucleotides XTP (xanthosine triphosphate), dITP (deoxyinosine triphosphate) and ITP. Seems to function as a house-cleaning enzyme that removes non-canonical purine nucleotides from the nucleotide pool, thus preventing their incorporation into DNA/RNA and avoiding chromosomal lesions. This chain is dITP/XTP pyrophosphatase, found in Burkholderia mallei (strain ATCC 23344).